An 89-amino-acid chain; its full sequence is Elongation factor 1-beta (89 aa).

Belongs to the EF-1-beta/EF-1-delta family.

Promotes the exchange of GDP for GTP in EF-1-alpha/GDP, thus allowing the regeneration of EF-1-alpha/GTP that could then be used to form the ternary complex EF-1-alpha/GTP/AAtRNA. This Methanococcus vannielii (strain ATCC 35089 / DSM 1224 / JCM 13029 / OCM 148 / SB) protein is Elongation factor 1-beta.